Consider the following 483-residue polypeptide: Alginate biosynthesis protein AlgA (483 aa).

This sequence belongs to the mannose-6-phosphate isomerase type 2 family. Monomer. Co(2+) serves as cofactor.

The enzyme catalyses D-mannose 6-phosphate = D-fructose 6-phosphate. It carries out the reaction alpha-D-mannose 1-phosphate + GTP + H(+) = GDP-alpha-D-mannose + diphosphate. It functions in the pathway nucleotide-sugar biosynthesis; GDP-alpha-D-mannose biosynthesis; GDP-alpha-D-mannose from alpha-D-mannose 1-phosphate (GTP route): step 1/1. The protein operates within nucleotide-sugar biosynthesis; GDP-alpha-D-mannose biosynthesis; alpha-D-mannose 1-phosphate from D-fructose 6-phosphate: step 1/2. Its function is as follows. Produces a precursor for alginate polymerization. The alginate layer provides a protective barrier against host immune defenses and antibiotics. This is Alginate biosynthesis protein AlgA (algA) from Pseudomonas syringae pv. tomato (strain ATCC BAA-871 / DC3000).